A 510-amino-acid chain; its full sequence is Photosystem II CP47 reaction center protein (510 aa).

The Cytoplasmic portion of the chain corresponds to 2–16 (GLPWYRVHTVLINDP). The helical transmembrane segment at 17–37 (GRLIAAHLMHTALVAGWAGSM) threads the bilayer. The Lumenal portion of the chain corresponds to 38 to 94 (ALYELATFDPSDPVLNPMWRQGMFVLPFMARLGVTGSWSGWSITGETGIDPGFWSFE). Residues 95–116 (GVALAHIVLSGLLFLAACWHWV) traverse the membrane as a helical segment. The Cytoplasmic portion of the chain corresponds to 117–134 (YWDLELFRDPRTGEPALD). A helical transmembrane segment spans residues 135–157 (LPKMFGIHLFLAGLLCFGFGAFH). The Lumenal portion of the chain corresponds to 158–196 (LTGLFGPGMWVSDPYGLTGSVQPVAPEWGPDGFNPYNPG). A helical membrane pass occupies residues 197–218 (GVVAHHIAAGIVGIIAGLFHIL). The Cytoplasmic segment spans residues 219 to 233 (VRPPQRLYKALRMGN). A helical transmembrane segment spans residues 234-254 (IETVLSSSIAAVFFAAFVVAG). At 255–450 (TMWYGSATTP…GIFRTSPRGW (196 aa)) the chain is on the lumenal side. Residues 451–473 (FTFAHAVFALLFFFGHIWHGART) form a helical membrane-spanning segment. The Cytoplasmic segment spans residues 474 to 510 (LFRDVFSGIDPELSPEQVEWGFYQKVGDVTTRRKEAV).

In terms of assembly, PSII is composed of 1 copy each of membrane proteins PsbA, PsbB, PsbC, PsbD, PsbE, PsbF, PsbH, PsbI, PsbJ, PsbK, PsbL, PsbM, PsbT, PsbX, PsbY, PsbZ, Psb30/Ycf12, peripheral proteins PsbO, CyanoQ (PsbQ), PsbU, PsbV and a large number of cofactors. It forms dimeric complexes. Part of a photosystem II (PSII) assembly intermediate complex PSII-I; crystallized from a strain deleted of psbJ, it forms monomeric PSII before addition of the oxygen evolving complex. PSII-I includes 3 assembly factors not found in mature PSII (Psb27, Psb28 and Psb34). Binds multiple chlorophylls. PSII binds additional chlorophylls, carotenoids and specific lipids. is required as a cofactor.

The protein resides in the cellular thylakoid membrane. One of the components of the core complex of photosystem II (PSII). It binds chlorophyll and helps catalyze the primary light-induced photochemical processes of PSII. PSII is a light-driven water:plastoquinone oxidoreductase, using light energy to abstract electrons from H(2)O, generating O(2) and a proton gradient subsequently used for ATP formation. The sequence is that of Photosystem II CP47 reaction center protein from Thermosynechococcus vestitus (strain NIES-2133 / IAM M-273 / BP-1).